Consider the following 181-residue polypeptide: Large ribosomal subunit protein uL6 (181 aa).

The protein belongs to the universal ribosomal protein uL6 family. As to quaternary structure, part of the 50S ribosomal subunit.

In terms of biological role, this protein binds to the 23S rRNA, and is important in its secondary structure. It is located near the subunit interface in the base of the L7/L12 stalk, and near the tRNA binding site of the peptidyltransferase center. The sequence is that of Large ribosomal subunit protein uL6 from Synechococcus sp. (strain JA-3-3Ab) (Cyanobacteria bacterium Yellowstone A-Prime).